Consider the following 485-residue polypeptide: E3 ubiquitin-protein ligase rnf8 (485 aa).

The region spanning 43–97 is the FHA domain; the sequence is VSVGRGLNVTHQILSSSCPLMISRIHCVFKLNEGRQWTVTDNKSLNGVWVNGKRI. The disordered stretch occupies residues 150-232; that stretch reads AASLSQKLKN…SSTCSDSSQH (83 aa). Residues 199–219 are compositionally biased toward basic and acidic residues; the sequence is GERRETLKLSSRPLEEDRDKA. Residues 221–230 show a composition bias toward low complexity; the sequence is SSSSTCSDSS. The segment at 392 to 430 adopts an RING-type zinc-finger fold; sequence CSICSELFIEAVTLNCAHSFCQHCISEWRNRKDKCPMCW.

The protein belongs to the RNF8 family. As to quaternary structure, homodimer. Forms a E2-E3 ubiquitin ligase complex composed of the rnf8 homodimer and a E2 heterodimer of ube2n and ube2v2.

The protein localises to the nucleus. The enzyme catalyses S-ubiquitinyl-[E2 ubiquitin-conjugating enzyme]-L-cysteine + [acceptor protein]-L-lysine = [E2 ubiquitin-conjugating enzyme]-L-cysteine + N(6)-ubiquitinyl-[acceptor protein]-L-lysine.. The protein operates within protein modification; protein ubiquitination. In terms of biological role, E3 ubiquitin-protein ligase that plays a key role in DNA damage signaling via 2 distinct roles: by mediating the 'Lys-63'-linked ubiquitination of histones H2A and H2AX and promoting the recruitment of DNA repair proteins at double-strand breaks (DSBs) sites, and by catalyzing 'Lys-48'-linked ubiquitination to remove target proteins from DNA damage sites. Following DNA DSBs, it is recruited to the sites of damage by ATM-phosphorylated mdc1 and catalyzes the 'Lys-63'-linked ubiquitination of histones H2A and H2AX. H2A ubiquitination also mediates the ATM-dependent transcriptional silencing at regions flanking DSBs in cis, a mechanism to avoid collision between transcription and repair intermediates. Also catalyzes the formation of 'Lys-48'-linked polyubiquitin chains, leading to degradation of substrate proteins. In addition to its function in damage signaling, also plays a role in higher-order chromatin structure by mediating extensive chromatin decondensation. This chain is E3 ubiquitin-protein ligase rnf8, found in Danio rerio (Zebrafish).